A 259-amino-acid chain; its full sequence is Proteasome subunit alpha (259 aa).

A disordered region spans residues 222-259 (RITGPALEQLIPAEPAPASEPAPESKPDTETKPADPQD). Over residues 244 to 259 (PESKPDTETKPADPQD) the composition is skewed to basic and acidic residues.

This sequence belongs to the peptidase T1A family. As to quaternary structure, the 20S proteasome core is composed of 14 alpha and 14 beta subunits that assemble into four stacked heptameric rings, resulting in a barrel-shaped structure. The two inner rings, each composed of seven catalytic beta subunits, are sandwiched by two outer rings, each composed of seven alpha subunits. The catalytic chamber with the active sites is on the inside of the barrel. Has a gated structure, the ends of the cylinder being occluded by the N-termini of the alpha-subunits. Is capped by the proteasome-associated ATPase, ARC.

The protein resides in the cytoplasm. It functions in the pathway protein degradation; proteasomal Pup-dependent pathway. The formation of the proteasomal ATPase ARC-20S proteasome complex, likely via the docking of the C-termini of ARC into the intersubunit pockets in the alpha-rings, may trigger opening of the gate for substrate entry. Interconversion between the open-gate and close-gate conformations leads to a dynamic regulation of the 20S proteasome proteolysis activity. Its function is as follows. Component of the proteasome core, a large protease complex with broad specificity involved in protein degradation. The sequence is that of Proteasome subunit alpha from Rhodococcus jostii (strain RHA1).